A 55-amino-acid polypeptide reads, in one-letter code: Large ribosomal subunit protein bL33 (55 aa).

This sequence belongs to the bacterial ribosomal protein bL33 family.

The chain is Large ribosomal subunit protein bL33 (rpmG) from Nitrobacter hamburgensis (strain DSM 10229 / NCIMB 13809 / X14).